Reading from the N-terminus, the 202-residue chain is Orotate phosphoribosyltransferase (202 aa).

5-phospho-alpha-D-ribose 1-diphosphate contacts are provided by residues lysine 93 and glutamate 113–serine 121. 2 residues coordinate orotate: threonine 117 and arginine 145.

This sequence belongs to the purine/pyrimidine phosphoribosyltransferase family. PyrE subfamily. In terms of assembly, homodimer. Mg(2+) is required as a cofactor.

It catalyses the reaction orotidine 5'-phosphate + diphosphate = orotate + 5-phospho-alpha-D-ribose 1-diphosphate. Its pathway is pyrimidine metabolism; UMP biosynthesis via de novo pathway; UMP from orotate: step 1/2. Functionally, catalyzes the transfer of a ribosyl phosphate group from 5-phosphoribose 1-diphosphate to orotate, leading to the formation of orotidine monophosphate (OMP). This is Orotate phosphoribosyltransferase from Campylobacter concisus (strain 13826).